Here is a 101-residue protein sequence, read N- to C-terminus: U1-sicaritoxin-Li1a (101 aa).

The first 19 residues, 1–19, serve as a signal peptide directing secretion; the sequence is MRFLVGAVLVVVLVACATA. Positions 20–35 are excised as a propeptide; it reads FESDAETFKSLVVEER. Cystine bridges form between C37-C54, C45-C59, C53-C72, and C61-C70. K81 carries the lysine amide modification. The propeptide occupies 85–101; sequence ALLLPVETHRLLFPEQW.

This sequence belongs to the neurotoxin 28 (Litx) family. As to expression, expressed by the venom gland.

The protein resides in the secreted. Toxin active against insects (S.frugiperda larvae). May act on sodium (Nav) or calcium channels (Cav). The polypeptide is U1-sicaritoxin-Li1a (Loxosceles intermedia (Brown spider)).